Reading from the N-terminus, the 402-residue chain is Exodeoxyribonuclease 7 large subunit (402 aa).

The protein belongs to the XseA family. In terms of assembly, heterooligomer composed of large and small subunits.

It localises to the cytoplasm. The enzyme catalyses Exonucleolytic cleavage in either 5'- to 3'- or 3'- to 5'-direction to yield nucleoside 5'-phosphates.. Its function is as follows. Bidirectionally degrades single-stranded DNA into large acid-insoluble oligonucleotides, which are then degraded further into small acid-soluble oligonucleotides. The protein is Exodeoxyribonuclease 7 large subunit of Moorella thermoacetica (strain ATCC 39073 / JCM 9320).